A 663-amino-acid polypeptide reads, in one-letter code: DNA topoisomerase 1 (663 aa).

One can recognise a Toprim domain in the interval 4–137 (SWLIITEKDN…TVKVDRVRYS (134 aa)). Mg(2+)-binding residues include Glu10 and Asp106. A Topo IA-type catalytic domain is found at 155–558 (DFNLANAALA…ESREMLLQIL (404 aa)). The segment at 193-198 (SVGRVQ) is interaction with DNA. Tyr306 functions as the O-(5'-phospho-DNA)-tyrosine intermediate in the catalytic mechanism. The segment at 583 to 610 (CPECGGELVVRQSKAGKRFIGCSNYPDC) adopts a C4-type 1 zinc-finger fold. The C4-type 2; atypical zinc finger occupies 629 to 653 (CKEHEIKEVKIRTKKGYWNLGCPYC).

This sequence belongs to the type IA topoisomerase family. Monomer. Mg(2+) serves as cofactor.

The catalysed reaction is ATP-independent breakage of single-stranded DNA, followed by passage and rejoining.. In terms of biological role, releases the supercoiling and torsional tension of DNA, which is introduced during the DNA replication and transcription, by transiently cleaving and rejoining one strand of the DNA duplex. Introduces a single-strand break via transesterification at a target site in duplex DNA. The scissile phosphodiester is attacked by the catalytic tyrosine of the enzyme, resulting in the formation of a DNA-(5'-phosphotyrosyl)-enzyme intermediate and the expulsion of a 3'-OH DNA strand. The free DNA strand then undergoes passage around the unbroken strand, thus removing DNA supercoils. Finally, in the religation step, the DNA 3'-OH attacks the covalent intermediate to expel the active-site tyrosine and restore the DNA phosphodiester backbone. This Archaeoglobus fulgidus (strain ATCC 49558 / DSM 4304 / JCM 9628 / NBRC 100126 / VC-16) protein is DNA topoisomerase 1.